Consider the following 263-residue polypeptide: MKPTTISLLQKCKQEKKRFATITAYDYSFAKLFADEGINVMLVGDSLGMTIQGHDSTLPVTVEDIAYHTRAVRRGAPNCLLLSDLPFMAYATPEQACENAAIVMRAGANMVKIEGGAWLVDTVKMLTERAVPVCGHLGLTPQSVNIFGGYKIQGRGDAGQVLLDDALALEAAGAQLLVLECVPVELAKRVTEALSIPVIGIGAGNVTDGQILVMHDAFGITGGHIPKFAKNFLAEAGDMRAAVQQYMAEVESGVYPGEEHSFH.

Residues Asp-45 and Asp-84 each contribute to the Mg(2+) site. Residues 45–46 (DS), Asp-84, and Lys-112 each bind 3-methyl-2-oxobutanoate. Glu-114 provides a ligand contact to Mg(2+). The active-site Proton acceptor is Glu-180.

This sequence belongs to the PanB family. As to quaternary structure, homodecamer; pentamer of dimers. Mg(2+) serves as cofactor.

The protein resides in the cytoplasm. It catalyses the reaction 3-methyl-2-oxobutanoate + (6R)-5,10-methylene-5,6,7,8-tetrahydrofolate + H2O = 2-dehydropantoate + (6S)-5,6,7,8-tetrahydrofolate. Its pathway is cofactor biosynthesis; (R)-pantothenate biosynthesis; (R)-pantoate from 3-methyl-2-oxobutanoate: step 1/2. Its function is as follows. Catalyzes the reversible reaction in which hydroxymethyl group from 5,10-methylenetetrahydrofolate is transferred onto alpha-ketoisovalerate to form ketopantoate. The polypeptide is 3-methyl-2-oxobutanoate hydroxymethyltransferase (Salmonella enteritidis PT4 (strain P125109)).